The primary structure comprises 652 residues: UvrABC system protein C (652 aa).

The 80-residue stretch at 20-99 (PEPGCYLMRD…IKNHQPHFNV (80 aa)) folds into the GIY-YIG domain. Residues 209-244 (DELQRLLDEQMNRYAERLDFESAARVRDQLQGLDQL) form the UVR domain.

This sequence belongs to the UvrC family. As to quaternary structure, interacts with UvrB in an incision complex.

It is found in the cytoplasm. Its function is as follows. The UvrABC repair system catalyzes the recognition and processing of DNA lesions. UvrC both incises the 5' and 3' sides of the lesion. The N-terminal half is responsible for the 3' incision and the C-terminal half is responsible for the 5' incision. The polypeptide is UvrABC system protein C (Parasynechococcus marenigrum (strain WH8102)).